The following is a 79-amino-acid chain: Large ribosomal subunit protein bL31 (79 aa).

The protein belongs to the bacterial ribosomal protein bL31 family. Type A subfamily. In terms of assembly, part of the 50S ribosomal subunit.

Functionally, binds the 23S rRNA. This chain is Large ribosomal subunit protein bL31, found in Nostoc sp. (strain PCC 7120 / SAG 25.82 / UTEX 2576).